A 117-amino-acid chain; its full sequence is Large ribosomal subunit protein eL34 (117 aa).

Belongs to the eukaryotic ribosomal protein eL34 family. In terms of assembly, component of the large ribosomal subunit.

Its subcellular location is the cytoplasm. It localises to the cytosol. The protein localises to the endoplasmic reticulum. Its function is as follows. Component of the large ribosomal subunit. The ribosome is a large ribonucleoprotein complex responsible for the synthesis of proteins in the cell. The sequence is that of Large ribosomal subunit protein eL34 (rpl34) from Ictalurus punctatus (Channel catfish).